The primary structure comprises 703 residues: Prolyl 3-hydroxylase 2 (703 aa).

Positions 1–21 (MRESTWVSLLLLLLLPAPQRG) are cleaved as a signal peptide. Residues 18-40 (PQRGGPQDGRGSPEPEPERGPLQ) are disordered. TPR repeat units follow at residues 42-75 (FDLL…HRRL), 144-177 (RVPY…NPEH), 205-238 (HLES…YFNE), and 301-334 (PLHY…HPDD). N-linked (GlcNAc...) asparagine glycans are attached at residues Asn444, Asn455, and Asn544. The 115-residue stretch at 552 to 666 (THMVCRTALS…RCAVALWFTL (115 aa)) folds into the Fe2OG dioxygenase domain. Fe cation-binding residues include His575, Asp577, and His647. Arg657 is a catalytic residue. The short motif at 700-703 (KDEL) is the Prevents secretion from ER element.

Belongs to the leprecan family. Fe cation is required as a cofactor. Requires L-ascorbate as cofactor. Detected at low levels in cartilage.

It localises to the endoplasmic reticulum. The protein resides in the sarcoplasmic reticulum. The protein localises to the golgi apparatus. The catalysed reaction is L-prolyl-[collagen] + 2-oxoglutarate + O2 = trans-3-hydroxy-L-prolyl-[collagen] + succinate + CO2. Functionally, prolyl 3-hydroxylase that catalyzes the post-translational formation of 3-hydroxyproline on collagens. Contributes to proline 3-hydroxylation of collagen COL4A1 and COL1A1 in tendons, the eye sclera and in the eye lens capsule. Has high activity with the type IV collagen COL4A1, and lower activity with COL1A1. Catalyzes hydroxylation of the first Pro in Gly-Pro-Hyp sequences where Hyp is 4-hydroxyproline. Has no activity on substrates that lack 4-hydroxyproline in the third position. The chain is Prolyl 3-hydroxylase 2 from Rattus norvegicus (Rat).